Here is an 856-residue protein sequence, read N- to C-terminus: uncharacterized protein (856 aa).

This is an uncharacterized protein from Rickettsia felis (strain ATCC VR-1525 / URRWXCal2) (Rickettsia azadi).